Consider the following 308-residue polypeptide: MQEIENLHQSVLLQEVLQAFTPLEEGVLVDCTLGLGGHSKALLSQKPHLKLIGIDKDKFAQEIAKERLKAFEGRYNLLSGGFAKRFKEALEIHGDRIKGVLVDLGVSSLQLDDDNRGFNFHSHALDMRMDLESDLNAQKVINSYPVIALEKIFRDYGEIKEYKKIAHKIAERRAKKPFKDAKDLSDFLSSFSKNKKIHPATLVFQAVRIEVNSELEELKEFLQCARNLNGAILCVISFHSLEDGLVKNAFKDYAKNCICDPLSFQCTCSNNHALGAILTKKPITPSPEEIKNNRRSRSAKMRVFQFKP.

S-adenosyl-L-methionine is bound by residues 36–38 (GGH), D55, F86, D103, and Q110.

Belongs to the methyltransferase superfamily. RsmH family.

It is found in the cytoplasm. It carries out the reaction cytidine(1402) in 16S rRNA + S-adenosyl-L-methionine = N(4)-methylcytidine(1402) in 16S rRNA + S-adenosyl-L-homocysteine + H(+). Functionally, specifically methylates the N4 position of cytidine in position 1402 (C1402) of 16S rRNA. The polypeptide is Ribosomal RNA small subunit methyltransferase H (Helicobacter pylori (strain G27)).